Here is a 207-residue protein sequence, read N- to C-terminus: Histidine biosynthesis bifunctional protein HisIE (207 aa).

Positions 1–115 are phosphoribosyl-AMP cyclohydrolase; it reads MLSKKENLLK…FFLKENTLNF (115 aa). The interval 116-207 is phosphoribosyl-ATP pyrophosphohydrolase; it reads LSKLEDLIED…NLKKRKTEKL (92 aa).

The protein in the N-terminal section; belongs to the PRA-CH family. It in the C-terminal section; belongs to the PRA-PH family.

It localises to the cytoplasm. It catalyses the reaction 1-(5-phospho-beta-D-ribosyl)-ATP + H2O = 1-(5-phospho-beta-D-ribosyl)-5'-AMP + diphosphate + H(+). The enzyme catalyses 1-(5-phospho-beta-D-ribosyl)-5'-AMP + H2O = 1-(5-phospho-beta-D-ribosyl)-5-[(5-phospho-beta-D-ribosylamino)methylideneamino]imidazole-4-carboxamide. It functions in the pathway amino-acid biosynthesis; L-histidine biosynthesis; L-histidine from 5-phospho-alpha-D-ribose 1-diphosphate: step 2/9. It participates in amino-acid biosynthesis; L-histidine biosynthesis; L-histidine from 5-phospho-alpha-D-ribose 1-diphosphate: step 3/9. This chain is Histidine biosynthesis bifunctional protein HisIE (hisI), found in Buchnera aphidicola subsp. Schizaphis graminum (strain Sg).